The sequence spans 482 residues: Mannose-1-phosphate guanylyltransferase 2 (482 aa).

It belongs to the mannose-6-phosphate isomerase type 2 family.

The enzyme catalyses alpha-D-mannose 1-phosphate + GTP + H(+) = GDP-alpha-D-mannose + diphosphate. Its pathway is nucleotide-sugar biosynthesis; GDP-alpha-D-mannose biosynthesis; GDP-alpha-D-mannose from alpha-D-mannose 1-phosphate (GTP route): step 1/1. Functionally, involved in GDP-mannose biosynthesis which serves as the activated sugar nucleotide precursor for mannose residues in cell surface polysaccharides. This enzyme participates in synthesis of the LPS O antigen. The polypeptide is Mannose-1-phosphate guanylyltransferase 2 (manC2) (Escherichia coli O157:H7).